We begin with the raw amino-acid sequence, 202 residues long: Oocyte-secreted protein 1 (202 aa).

The N-terminal stretch at 1–21 is a signal peptide; sequence MKPFVGLLGLLLLLSFMKTCA. Positions 157 to 183 are disordered; that stretch reads QPNLSTSSEDHHVSTEPWASETSRSEA.

The protein belongs to the PLAC1 family. In terms of tissue distribution, expressed in oocytes in primary through antral-stage follicles. Expressed in liver and ovary.

Its subcellular location is the secreted. Its function is as follows. May be involved in cell differentiation. In Mus musculus (Mouse), this protein is Oocyte-secreted protein 1 (Oosp1).